The chain runs to 305 residues: Serine/threonine-protein phosphatase PP-X homolog 3 (305 aa).

Residues Asp53, His55, Asp81, and Asn113 each coordinate Mn(2+). The active-site Proton donor is the His114. His163 and His237 together coordinate Mn(2+).

This sequence belongs to the PPP phosphatase family. PP-4 (PP-X) subfamily. Mn(2+) serves as cofactor.

It carries out the reaction O-phospho-L-seryl-[protein] + H2O = L-seryl-[protein] + phosphate. The enzyme catalyses O-phospho-L-threonyl-[protein] + H2O = L-threonyl-[protein] + phosphate. The sequence is that of Serine/threonine-protein phosphatase PP-X homolog 3 (Ppx3) from Paramecium tetraurelia.